A 363-amino-acid chain; its full sequence is Anhydro-N-acetylmuramic acid kinase (363 aa).

Residue Gly-10–Asp-17 participates in ATP binding.

Belongs to the anhydro-N-acetylmuramic acid kinase family.

The enzyme catalyses 1,6-anhydro-N-acetyl-beta-muramate + ATP + H2O = N-acetyl-D-muramate 6-phosphate + ADP + H(+). The protein operates within amino-sugar metabolism; 1,6-anhydro-N-acetylmuramate degradation. It functions in the pathway cell wall biogenesis; peptidoglycan recycling. Its function is as follows. Catalyzes the specific phosphorylation of 1,6-anhydro-N-acetylmuramic acid (anhMurNAc) with the simultaneous cleavage of the 1,6-anhydro ring, generating MurNAc-6-P. Is required for the utilization of anhMurNAc either imported from the medium or derived from its own cell wall murein, and thus plays a role in cell wall recycling. Contributes to intrinsic fosfomycin resistance in P.putida. The protein is Anhydro-N-acetylmuramic acid kinase of Pseudomonas putida (strain ATCC 47054 / DSM 6125 / CFBP 8728 / NCIMB 11950 / KT2440).